Reading from the N-terminus, the 330-residue chain is Serpentine receptor class J-38 (330 aa).

A run of 7 helical transmembrane segments spans residues I6–V26, L43–I63, L98–Y118, L135–A155, T200–L220, I253–I273, and G285–F305.

It belongs to the nematode receptor-like protein srj family.

It localises to the membrane. This chain is Serpentine receptor class J-38 (srj-38), found in Caenorhabditis elegans.